Here is a 209-residue protein sequence, read N- to C-terminus: Large ribosomal subunit protein uL3 (209 aa).

At glutamine 150 the chain carries N5-methylglutamine.

Belongs to the universal ribosomal protein uL3 family. Part of the 50S ribosomal subunit. Forms a cluster with proteins L14 and L19. Post-translationally, methylated by PrmB.

In terms of biological role, one of the primary rRNA binding proteins, it binds directly near the 3'-end of the 23S rRNA, where it nucleates assembly of the 50S subunit. In Citrobacter koseri (strain ATCC BAA-895 / CDC 4225-83 / SGSC4696), this protein is Large ribosomal subunit protein uL3.